Reading from the N-terminus, the 188-residue chain is A-type ATP synthase subunit E (188 aa).

Belongs to the V-ATPase E subunit family. In terms of assembly, has multiple subunits with at least A(3), B(3), C, D, E, F, H, I and proteolipid K(x).

The protein localises to the cell membrane. In terms of biological role, component of the A-type ATP synthase that produces ATP from ADP in the presence of a proton gradient across the membrane. The protein is A-type ATP synthase subunit E of Archaeoglobus fulgidus (strain ATCC 49558 / DSM 4304 / JCM 9628 / NBRC 100126 / VC-16).